A 180-amino-acid polypeptide reads, in one-letter code: ATP-dependent protease subunit HslV (180 aa).

Thr-5 is an active-site residue. Gly-165, Cys-168, and Thr-171 together coordinate Na(+).

This sequence belongs to the peptidase T1B family. HslV subfamily. As to quaternary structure, a double ring-shaped homohexamer of HslV is capped on each side by a ring-shaped HslU homohexamer. The assembly of the HslU/HslV complex is dependent on binding of ATP.

The protein resides in the cytoplasm. The enzyme catalyses ATP-dependent cleavage of peptide bonds with broad specificity.. Allosterically activated by HslU binding. In terms of biological role, protease subunit of a proteasome-like degradation complex believed to be a general protein degrading machinery. The sequence is that of ATP-dependent protease subunit HslV from Helicobacter acinonychis (strain Sheeba).